The following is a 353-amino-acid chain: Immune-associated nucleotide-binding protein 8 (353 aa).

The segment covering 1–10 (MANDQKNSES) has biased composition (polar residues). A disordered region spans residues 1-43 (MANDQKNSESFPAKEDHKKDDAAAPAEVDHKDEFSASQPHPVE). Residues 12–34 (PAKEDHKKDDAAAPAEVDHKDEF) show a composition bias toward basic and acidic residues. The region spanning 40-248 (HPVENIVLVG…YTDEMYHMIK (209 aa)) is the AIG1-type G domain. The segment at 49-56 (GRTGNGKS) is G1. Residues 49–57 (GRTGNGKSA) and serine 70 each bind GTP. The interval 76–80 (GVTME) is G2. Positions 98–101 (DTPG) are G3. Residues 168–171 (TGGD) form a G4 region. Residues 207–209 (DNK) are G5. Asparagine 208 lines the GTP pocket. Residues 244 to 291 (YHMIKEENERHKKEQEELESKGHSEEQLAALMKELQIMNERNLKAMAE) adopt a coiled-coil conformation.

The protein belongs to the TRAFAC class TrmE-Era-EngA-EngB-Septin-like GTPase superfamily. AIG1/Toc34/Toc159-like paraseptin GTPase family. IAN subfamily. As to expression, mainly expressed in leaves.

This chain is Immune-associated nucleotide-binding protein 8, found in Arabidopsis thaliana (Mouse-ear cress).